Consider the following 360-residue polypeptide: GTPase Obg (360 aa).

The 156-residue stretch at 1-156 folds into the Obg domain; sequence MFVDSVEIII…KCVRLELKLI (156 aa). The OBG-type G domain maps to 157 to 360; the sequence is ADIGLVGFPN…LKFVLLEALP (204 aa). Residues 163-170, 188-192, 210-213, 279-282, and 341-343 contribute to the GTP site; these read GFPNAGKS, FTTLV, DIPG, NKCD, and SAL. Mg(2+) is bound by residues S170 and T190.

It belongs to the TRAFAC class OBG-HflX-like GTPase superfamily. OBG GTPase family. As to quaternary structure, monomer. Mg(2+) serves as cofactor.

It is found in the cytoplasm. An essential GTPase which binds GTP, GDP and possibly (p)ppGpp with moderate affinity, with high nucleotide exchange rates and a fairly low GTP hydrolysis rate. Plays a role in control of the cell cycle, stress response, ribosome biogenesis and in those bacteria that undergo differentiation, in morphogenesis control. The sequence is that of GTPase Obg from Helicobacter pylori (strain Shi470).